The following is a 95-amino-acid chain: Protein TusB (95 aa).

The protein belongs to the DsrH/TusB family. As to quaternary structure, heterohexamer, formed by a dimer of trimers. The hexameric TusBCD complex contains 2 copies each of TusB, TusC and TusD. The TusBCD complex interacts with TusE.

Its subcellular location is the cytoplasm. Functionally, part of a sulfur-relay system required for 2-thiolation of 5-methylaminomethyl-2-thiouridine (mnm(5)s(2)U) at tRNA wobble positions. The protein is Protein TusB of Escherichia coli O45:K1 (strain S88 / ExPEC).